A 571-amino-acid polypeptide reads, in one-letter code: uncharacterized protein (571 aa).

3 disordered regions span residues 71–128 (TNHY…RVTA), 142–258 (NKND…PQNE), and 298–336 (LNRQ…TTKR). Over residues 88-113 (PNRSGVSSPVNDGASSPTQRGGTTPA) the composition is skewed to polar residues. Positions 168–184 (RGYPGPGPRGYPGPGPR) are enriched in pro residues. Low complexity predominate over residues 205–215 (QGPRRYSCPGP). Residues 217 to 234 (GYPGPGSSGRPDPGGGLQ) are compositionally biased toward gly residues. Positions 311-326 (PEKQQTPPPEETQNAQ) are enriched in low complexity.

This is an uncharacterized protein from Drosophila melanogaster (Fruit fly).